A 419-amino-acid chain; its full sequence is Pregnancy-specific beta-1-glycoprotein 4 (419 aa).

The N-terminal stretch at 1 to 34 (MGPLSAPPCTQRITWKGVLLTASLLNFWNPPTTA) is a signal peptide. The Ig-like V-type domain maps to 35–144 (QVTIEAQPPK…TGHFTFTLHL (110 aa)). Asn104, Asn111, Asn199, Asn268, Asn299, and Asn303 each carry an N-linked (GlcNAc...) asparagine glycan. 3 consecutive Ig-like C2-type domains span residues 147–234 (PKPS…VTLN), 237–327 (PKLS…VTLN), and 332–410 (PDLP…KSIT). 3 disulfide bridges follow: Cys169–Cys217, Cys262–Cys310, and Cys354–Cys394.

Belongs to the immunoglobulin superfamily. CEA family.

It localises to the secreted. In Homo sapiens (Human), this protein is Pregnancy-specific beta-1-glycoprotein 4 (PSG4).